A 192-amino-acid chain; its full sequence is Peptide deformylase 1 (192 aa).

Fe cation-binding residues include Cys101 and His143. Glu144 is a catalytic residue. His147 contributes to the Fe cation binding site.

This sequence belongs to the polypeptide deformylase family. Requires Fe(2+) as cofactor.

The catalysed reaction is N-terminal N-formyl-L-methionyl-[peptide] + H2O = N-terminal L-methionyl-[peptide] + formate. In terms of biological role, removes the formyl group from the N-terminal Met of newly synthesized proteins. Requires at least a dipeptide for an efficient rate of reaction. N-terminal L-methionine is a prerequisite for activity but the enzyme has broad specificity at other positions. In Prochlorococcus marinus (strain MIT 9313), this protein is Peptide deformylase 1.